The following is a 183-amino-acid chain: Ribulose bisphosphate carboxylase small subunit, chloroplastic 7 (183 aa).

The transit peptide at 1-43 directs the protein to the chloroplast; that stretch reads MAAAMMNKTVVVGKESVKGGVAPKVAMSRGGFLNSGIMKKDRD.

This sequence belongs to the RuBisCO small chain family. As to quaternary structure, heterohexadecamer of 8 large and 8 small subunits.

It is found in the plastid. The protein localises to the chloroplast. In terms of biological role, ruBisCO catalyzes two reactions: the carboxylation of D-ribulose 1,5-bisphosphate, the primary event in carbon dioxide fixation, as well as the oxidative fragmentation of the pentose substrate. Both reactions occur simultaneously and in competition at the same active site. Although the small subunit is not catalytic it is essential for maximal activity. This is Ribulose bisphosphate carboxylase small subunit, chloroplastic 7 from Acetabularia peniculus (Green alga).